Here is a 337-residue protein sequence, read N- to C-terminus: Holliday junction branch migration complex subunit RuvB (337 aa).

Positions 1 to 179 (MTHQVSVLHQ…FSFSGRVSYY (179 aa)) are large ATPase domain (RuvB-L). Residues L18, R19, G60, K63, T64, S65, 126–128 (EDY), R169, Y179, and R216 contribute to the ATP site. T64 lines the Mg(2+) pocket. Positions 180-250 (SDEDLATILK…VAEKALSMLL (71 aa)) are small ATPAse domain (RuvB-S). The segment at 253 to 337 (DWGLNEIDIK…DNLQILGEEK (85 aa)) is head domain (RuvB-H). Residues K308 and R313 each contribute to the DNA site.

This sequence belongs to the RuvB family. In terms of assembly, homohexamer. Forms an RuvA(8)-RuvB(12)-Holliday junction (HJ) complex. HJ DNA is sandwiched between 2 RuvA tetramers; dsDNA enters through RuvA and exits via RuvB. An RuvB hexamer assembles on each DNA strand where it exits the tetramer. Each RuvB hexamer is contacted by two RuvA subunits (via domain III) on 2 adjacent RuvB subunits; this complex drives branch migration. In the full resolvosome a probable DNA-RuvA(4)-RuvB(12)-RuvC(2) complex forms which resolves the HJ.

The protein localises to the cytoplasm. It catalyses the reaction ATP + H2O = ADP + phosphate + H(+). Its function is as follows. The RuvA-RuvB-RuvC complex processes Holliday junction (HJ) DNA during genetic recombination and DNA repair, while the RuvA-RuvB complex plays an important role in the rescue of blocked DNA replication forks via replication fork reversal (RFR). RuvA specifically binds to HJ cruciform DNA, conferring on it an open structure. The RuvB hexamer acts as an ATP-dependent pump, pulling dsDNA into and through the RuvAB complex. RuvB forms 2 homohexamers on either side of HJ DNA bound by 1 or 2 RuvA tetramers; 4 subunits per hexamer contact DNA at a time. Coordinated motions by a converter formed by DNA-disengaged RuvB subunits stimulates ATP hydrolysis and nucleotide exchange. Immobilization of the converter enables RuvB to convert the ATP-contained energy into a lever motion, pulling 2 nucleotides of DNA out of the RuvA tetramer per ATP hydrolyzed, thus driving DNA branch migration. The RuvB motors rotate together with the DNA substrate, which together with the progressing nucleotide cycle form the mechanistic basis for DNA recombination by continuous HJ branch migration. Branch migration allows RuvC to scan DNA until it finds its consensus sequence, where it cleaves and resolves cruciform DNA. In Chlamydia felis (strain Fe/C-56) (Chlamydophila felis), this protein is Holliday junction branch migration complex subunit RuvB.